Reading from the N-terminus, the 389-residue chain is Endonuclease 8-like 1 (389 aa).

The Schiff-base intermediate with DNA role is filled by proline 2. Glutamate 3 acts as the Proton donor in catalysis. Lysine 54 acts as the Proton donor; for beta-elimination activity in catalysis. Residue asparagine 176 coordinates DNA. The disordered stretch occupies residues 278 to 389 (TIWFQGDPGP…PREAGESSAS (112 aa)). Positions 322–333 (SRMRRARKHPPK) are enriched in basic residues. The segment covering 336–351 (AQQSEGAGLQQNQETP) has biased composition (polar residues). Over residues 357–373 (GKRRGQRASTGHRRRPK) the composition is skewed to basic residues. The span at 374-389 (TIPDTRPREAGESSAS) shows a compositional bias: basic and acidic residues.

Belongs to the FPG family. As to expression, detected in heart, spleen and lung.

The protein resides in the cytoplasm. The protein localises to the cytoskeleton. It is found in the microtubule organizing center. Its subcellular location is the centrosome. It localises to the nucleus. The protein resides in the chromosome. The catalysed reaction is 2'-deoxyribonucleotide-(2'-deoxyribose 5'-phosphate)-2'-deoxyribonucleotide-DNA = a 3'-end 2'-deoxyribonucleotide-(2,3-dehydro-2,3-deoxyribose 5'-phosphate)-DNA + a 5'-end 5'-phospho-2'-deoxyribonucleoside-DNA + H(+). Its function is as follows. Involved in base excision repair of DNA damaged by oxidation or by mutagenic agents. Acts as a DNA glycosylase that recognizes and removes damaged bases. Has a preference for oxidized pyrimidines, such as thymine glycol, formamidopyrimidine (Fapy) and 5-hydroxyuracil. Has marginal activity towards 8-oxoguanine. Has AP (apurinic/apyrimidinic) lyase activity and introduces nicks in the DNA strand. Cleaves the DNA backbone by beta-delta elimination to generate a single-strand break at the site of the removed base with both 3'- and 5'-phosphates. Has DNA glycosylase/lyase activity towards mismatched uracil and thymine, in particular in U:C and T:C mismatches. Specifically binds 5-hydroxymethylcytosine (5hmC), suggesting that it acts as a specific reader of 5hmC. This chain is Endonuclease 8-like 1 (Neil1), found in Mus musculus (Mouse).